A 116-amino-acid chain; its full sequence is Thioredoxin H-type (116 aa).

One can recognise a Thioredoxin domain in the interval 2 to 115; it reads AEEAQVIACH…HKIAVHAPIT (114 aa). Active-site nucleophile residues include cysteine 39 and cysteine 42. A disulfide bridge connects residues cysteine 39 and cysteine 42.

This sequence belongs to the thioredoxin family. Plant H-type subfamily.

It is found in the cytoplasm. In terms of biological role, participates in various redox reactions through the reversible oxidation of the active center dithiol to a disulfide. The H form is known to activate a number of cytosolic enzymes. This is Thioredoxin H-type from Fagopyrum esculentum (Common buckwheat).